A 132-amino-acid polypeptide reads, in one-letter code: Cytochrome b5 (132 aa).

Positions 2–78 constitute a Cytochrome b5 heme-binding domain; it reads GKIFTLAEVA…LDEYYVGDID (77 aa). Heme is bound by residues H37 and H61. Residues 104–124 traverse the membrane as a helical segment; sequence FVIKLLQFLVPLVILAGAIGI.

This sequence belongs to the cytochrome b5 family.

It localises to the endoplasmic reticulum membrane. The protein localises to the microsome membrane. Its function is as follows. Membrane bound hemoprotein which function as an electron carrier for several membrane bound oxygenases. The protein is Cytochrome b5 of Borago officinalis (Bourrache).